Here is a 459-residue protein sequence, read N- to C-terminus: UDP-N-acetylmuramoylalanine--D-glutamate ligase (459 aa).

ATP is bound at residue 119–125 (GTNGKTT).

Belongs to the MurCDEF family.

Its subcellular location is the cytoplasm. The catalysed reaction is UDP-N-acetyl-alpha-D-muramoyl-L-alanine + D-glutamate + ATP = UDP-N-acetyl-alpha-D-muramoyl-L-alanyl-D-glutamate + ADP + phosphate + H(+). It participates in cell wall biogenesis; peptidoglycan biosynthesis. Functionally, cell wall formation. Catalyzes the addition of glutamate to the nucleotide precursor UDP-N-acetylmuramoyl-L-alanine (UMA). The polypeptide is UDP-N-acetylmuramoylalanine--D-glutamate ligase (Lacticaseibacillus casei (strain BL23) (Lactobacillus casei)).